We begin with the raw amino-acid sequence, 1159 residues long: WASH complex subunit 5 (1159 aa).

This sequence belongs to the strumpellin family. As to quaternary structure, component of the WASH complex.

It is found in the early endosome. Functionally, acts at least in part as component of the WASH complex which seems to regulate washc1 nucleation-promoting factor (NPF) activity and is required for its membrane targeting during endosomal sorting. This Xenopus tropicalis (Western clawed frog) protein is WASH complex subunit 5.